The chain runs to 743 residues: Cytosolic neutral trehalase (743 aa).

Residues Asp-95, Asp-97, Asn-99, Gln-101, and Asp-106 each coordinate Ca(2+). Residues Arg-285, 292–293, Asn-329, 338–340, Glu-405, Arg-454, and Gly-457 contribute to the substrate site; these read WD and RSQ. Active-site proton donor/acceptor residues include Asp-459 and Glu-664.

The protein belongs to the glycosyl hydrolase 37 family. It depends on Ca(2+) as a cofactor.

The protein localises to the cytoplasm. The catalysed reaction is alpha,alpha-trehalose + H2O = alpha-D-glucose + beta-D-glucose. It participates in carbohydrate degradation. Hydrolyzes intracellular trehalose to glucose. The chain is Cytosolic neutral trehalase from Beauveria bassiana (strain ARSEF 2860) (White muscardine disease fungus).